We begin with the raw amino-acid sequence, 620 residues long: UvrABC system protein C (620 aa).

The 80-residue stretch at D13–I92 folds into the GIY-YIG domain. In terms of domain architecture, UVR spans T204 to I239.

This sequence belongs to the UvrC family. As to quaternary structure, interacts with UvrB in an incision complex.

It localises to the cytoplasm. The UvrABC repair system catalyzes the recognition and processing of DNA lesions. UvrC both incises the 5' and 3' sides of the lesion. The N-terminal half is responsible for the 3' incision and the C-terminal half is responsible for the 5' incision. The protein is UvrABC system protein C of Clostridium perfringens (strain ATCC 13124 / DSM 756 / JCM 1290 / NCIMB 6125 / NCTC 8237 / Type A).